A 258-amino-acid polypeptide reads, in one-letter code: uncharacterized protein (258 aa).

6 helical membrane passes run 24-44 (IPLF…VNIF), 70-90 (PLVH…FLLM), 100-120 (LCTI…AYLI), 130-150 (VYVG…LNLF), 157-177 (LLNL…VLGL), and 181-201 (FSIT…FSFA). His188 is an active-site residue.

It belongs to the peptidase S54 family.

It is found in the golgi apparatus membrane. This is an uncharacterized protein from Schizosaccharomyces pombe (strain 972 / ATCC 24843) (Fission yeast).